A 408-amino-acid polypeptide reads, in one-letter code: Succinylornithine transaminase (408 aa).

K252 bears the N6-(pyridoxal phosphate)lysine mark.

The protein belongs to the class-III pyridoxal-phosphate-dependent aminotransferase family. AstC subfamily. Requires pyridoxal 5'-phosphate as cofactor.

The catalysed reaction is N(2)-succinyl-L-ornithine + 2-oxoglutarate = N-succinyl-L-glutamate 5-semialdehyde + L-glutamate. It participates in amino-acid degradation; L-arginine degradation via AST pathway; L-glutamate and succinate from L-arginine: step 3/5. Catalyzes the transamination of N(2)-succinylornithine and alpha-ketoglutarate into N(2)-succinylglutamate semialdehyde and glutamate. Can also act as an acetylornithine aminotransferase. The sequence is that of Succinylornithine transaminase from Salmonella newport (strain SL254).